The primary structure comprises 3387 residues: Genome polyprotein (3387 aa).

Residues 1–100 (MNQRKKVVRP…LNILNGRKRS (100 aa)) are Cytoplasmic-facing. The interval 36–71 (LFSGKGPLRMVLAFITFLRVLSIPPTAGILKRWGQL) is hydrophobic; homodimerization of capsid protein C. A propeptide spans 100 to 113 (STMTLLCLIPTAMA) (ER anchor for the capsid protein C, removed in mature form by serine protease NS3). The chain crosses the membrane as a helical span at residues 101 to 117 (TMTLLCLIPTAMAFHLS). Over 118–237 (TRDGEPLMIV…GAWKHAQRVE (120 aa)) the chain is Extracellular. N-linked (GlcNAc...) asparagine; by host glycosylation is present at N182. Residues 238-258 (SWILRNPGFALLAGFMAYMIG) form a helical membrane-spanning segment. Residues 259 to 265 (QTGIQRT) are Cytoplasmic-facing. A helical transmembrane segment spans residues 266–279 (VFFVLMMLVAPSYG). Residues 280-723 (MRCVGVGNRD…AVHQVFGSVY (444 aa)) lie on the Extracellular side of the membrane. Disulfide bonds link C282/C309, C339/C400, C353/C384, C371/C395, C464/C564, and C581/C612. A glycan (N-linked (GlcNAc...) asparagine; by host) is linked at N346. The fusion peptide stretch occupies residues 377 to 390 (DRGWGNGCGLFGKG). A helical transmembrane segment spans residues 724-746 (TTMFGGVSWMVRILIGFLVLWIG). Over 747–750 (TNSR) the chain is Cytoplasmic. Residues 751 to 771 (NTSMAMTCIAVGGITLFLGFT) form a helical membrane-spanning segment. The Extracellular segment spans residues 772–1194 (VHADTGCAVS…MLGDTMSGRM (423 aa)). Intrachain disulfides connect C778–C789, C829–C917, C953–C997, C1054–C1103, C1065–C1087, and C1086–C1090. Residues N904 and N981 are each glycosylated (N-linked (GlcNAc...) asparagine; by host). A helical transmembrane segment spans residues 1195–1218 (GGQIHLAIMAVFKMSPGYVLGIFL). Over 1219–1224 (RKLTSR) the chain is Lumenal. The chain crosses the membrane as a helical span at residues 1225-1243 (ETALMVIGMAMTTVLSIPH). At 1244–1267 (DLMEFIDGISLGLILLKMVTHFDN) the chain is on the cytoplasmic side. A helical membrane pass occupies residues 1268 to 1288 (TQVGTLALSLTFIRSTMPLVM). A topological domain (lumenal) is located at residue A1289. The chain crosses the membrane as a helical span at residues 1290-1308 (WRTIMAVLFVVTLIPLCRT). Residues 1309–1316 (SCLQKQSH) are Lumenal-facing. Residues 1317-1337 (WVEITALILGAQALPVYLMTL) traverse the membrane as a helical segment. Residues 1338–1345 (MKGASKRS) lie on the Cytoplasmic side of the membrane. The helical transmembrane segment at 1346–1366 (WPLNEGIMAVGLVSLLGSALL) threads the bilayer. Residues 1367–1369 (KND) lie on the Lumenal side of the membrane. Residues 1370–1390 (VPLAGPMVAGGLLLAAYVMSG) form a helical membrane-spanning segment. At 1391-1437 (SSADLSLEKAANVQWDEMADITGSSPIIEVKQDEDGSFSIRDIEETN) the chain is on the cytoplasmic side. The interacts with and activates NS3 protease stretch occupies residues 1397–1436 (LEKAANVQWDEMADITGSSPIIEVKQDEDGSFSIRDIEET). The segment at residues 1438-1458 (MITLLVKLALITVSGLYPLAI) is an intramembrane region (helical). The Cytoplasmic portion of the chain corresponds to 1459 to 2146 (PVTMTLWYMW…LNELPESLET (688 aa)). Residues 1475–1652 (SGALWDVPSP…ERTGEPDYEV (178 aa)) form the Peptidase S7 domain. Catalysis depends on charge relay system; for serine protease NS3 activity residues H1525, D1549, and S1609. A Helicase ATP-binding domain is found at 1654–1810 (EDIFRKKRLT…QSNSPIEDIE (157 aa)). The segment at 1658-1661 (RKKR) is important for RNA-binding. 1667–1674 (LHPGAGKT) serves as a coordination point for ATP. Positions 1758–1761 (DEAH) match the DEAH box motif. In terms of domain architecture, Helicase C-terminal spans 1820–1987 (TGFDWITDYQ…IIPTLFGPER (168 aa)). Residue K1862 is modified to N6-acetyllysine; by host. A helical transmembrane segment spans residues 2147–2167 (LMLVALLGAMTAGIFLFFMQG). Topologically, residues 2168-2169 (KG) are lumenal. Residues 2170 to 2190 (IGKLSMGLIAIAVASGLLWVA) constitute an intramembrane region (helical). E2191 is a topological domain (lumenal). A helical transmembrane segment spans residues 2192-2212 (IQPQWIAASIILEFFLMVLLI). Residues 2213 to 2225 (PEPEKQRTPQDNQ) are Cytoplasmic-facing. The chain crosses the membrane as a helical span at residues 2226–2246 (LIYVILTILTIIGLIAANEMG). The Lumenal portion of the chain corresponds to 2247 to 2270 (LIEKTKTDFGFYQVKTETTILDVD). Positions 2271 to 2291 (LRPASAWTLYAVATTILTPML) form an intramembrane region, helical. Residues 2292 to 2301 (RHTIENTSAN) lie on the Lumenal side of the membrane. 2 N-linked (GlcNAc...) asparagine; by host glycosylation sites follow: N2297 and N2301. An intramembrane region (helical) is located at residues 2302–2322 (LSLAAIANQAAVLMGLGKGWP). Over 2323–2343 (LHRMDLGVPLLAMGCYSQVNP) the chain is Lumenal. The helical transmembrane segment at 2344–2364 (TTLIASLVMLLVHYAIIGPGL) threads the bilayer. Topologically, residues 2365–2409 (QAKATREAQKRTAAGIMKNPTVDGITVIDLEPISYDPKFEKQLGQ) are cytoplasmic. Residues 2410–2430 (VMLLVLCAGQLLLMRTTWAFC) traverse the membrane as a helical segment. The Lumenal portion of the chain corresponds to 2431-2455 (EVLTLATGPVLTLWEGNPGRFWNTT). N2453 is a glycosylation site (N-linked (GlcNAc...) asparagine; by host). A helical membrane pass occupies residues 2456 to 2476 (IAVSTANIFRGSYLAGAGLAF). Over 2477–3387 (SLIKNAQTPR…SAPFESEGVL (911 aa)) the chain is Cytoplasmic. The 263-residue stretch at 2489–2751 (TGTTGETLGE…DVDLGAGTRS (263 aa)) folds into the mRNA cap 0-1 NS5-type MT domain. Position 2543 (S2543) interacts with S-adenosyl-L-methionine. S2543 bears the Phosphoserine mark. K2548 functions as the For 2'-O-MTase activity in the catalytic mechanism. Residues 2564 to 2567 (VVDL) carry the SUMO-interacting motif motif. S-adenosyl-L-methionine-binding residues include G2573, W2574, T2591, K2592, D2618, and V2619. Catalysis depends on D2633, which acts as the For 2'-O-MTase activity. An S-adenosyl-L-methionine-binding site is contributed by I2634. Residues K2668 and E2704 each act as for 2'-O-MTase activity in the active site. Y2706 serves as a coordination point for S-adenosyl-L-methionine. E2925, H2929, C2934, and C2937 together coordinate Zn(2+). Positions 3016–3166 (LIYADDTAGW…PLDERFSTSL (151 aa)) constitute a RdRp catalytic domain. Residues H3200, C3216, and C3335 each coordinate Zn(2+).

In the N-terminal section; belongs to the class I-like SAM-binding methyltransferase superfamily. mRNA cap 0-1 NS5-type methyltransferase family. In terms of assembly, homodimer. Interacts (via N-terminus) with host EXOC1 (via C-terminus); this interaction results in EXOC1 degradation through the proteasome degradation pathway. Forms heterodimers with envelope protein E in the endoplasmic reticulum and Golgi. As to quaternary structure, homodimer; in the endoplasmic reticulum and Golgi. Interacts with protein prM. Interacts with non-structural protein 1. In terms of assembly, homodimer; Homohexamer when secreted. Interacts with envelope protein E. Interacts (via N-terminus) with serine protease NS3. As to quaternary structure, forms a heterodimer with serine protease NS3. May form homooligomers. In terms of assembly, forms a heterodimer with NS2B. Interacts with NS4B. Interacts with unphosphorylated RNA-directed RNA polymerase NS5; this interaction stimulates RNA-directed RNA polymerase NS5 guanylyltransferase activity. Interacts with host MAVS; this interaction inhibits the synthesis of IFN-beta. Interacts with host AUP1; the interaction occurs in the presence of Dengue virus NS4B and induces lipophagy which facilitates production of virus progeny particles. As to quaternary structure, interacts with serine protease NS3. In terms of assembly, homodimer. Interacts with host STAT2; this interaction inhibits the phosphorylation of the latter, and, when all viral proteins are present (polyprotein), targets STAT2 for degradation. Interacts with serine protease NS3. Interacts with host PAF1 complex; the interaction may prevent the recruitment of the PAF1 complex to interferon-responsive genes, and thus reduces the immune response. Specific enzymatic cleavages in vivo yield mature proteins. Cleavages in the lumen of endoplasmic reticulum are performed by host signal peptidase, whereas cleavages in the cytoplasmic side are performed by serine protease NS3. Signal cleavage at the 2K-4B site requires a prior NS3 protease-mediated cleavage at the 4A-2K site. In terms of processing, cleaved in post-Golgi vesicles by a host furin, releasing the mature small envelope protein M, and peptide pr. This cleavage is incomplete as up to 30% of viral particles still carry uncleaved prM. Post-translationally, N-glycosylated. N-glycosylated. The excreted form is glycosylated and this is required for efficient secretion of the protein from infected cells. In terms of processing, acetylated by host KAT5. Acetylation modulates NS3 RNA-binding and unwinding activities and plays an important positive role for viral replication. Post-translationally, sumoylation of RNA-directed RNA polymerase NS5 increases NS5 protein stability allowing proper viral RNA replication. Phosphorylated on serines residues. This phosphorylation may trigger NS5 nuclear localization.

It is found in the virion. It localises to the host nucleus. The protein resides in the host cytoplasm. Its subcellular location is the host perinuclear region. The protein localises to the secreted. It is found in the virion membrane. It localises to the host endoplasmic reticulum membrane. The protein resides in the host mitochondrion. It carries out the reaction Selective hydrolysis of -Xaa-Xaa-|-Yaa- bonds in which each of the Xaa can be either Arg or Lys and Yaa can be either Ser or Ala.. The catalysed reaction is RNA(n) + a ribonucleoside 5'-triphosphate = RNA(n+1) + diphosphate. It catalyses the reaction a ribonucleoside 5'-triphosphate + H2O = a ribonucleoside 5'-diphosphate + phosphate + H(+). The enzyme catalyses ATP + H2O = ADP + phosphate + H(+). It carries out the reaction a 5'-end (5'-triphosphoguanosine)-ribonucleoside in mRNA + S-adenosyl-L-methionine = a 5'-end (N(7)-methyl 5'-triphosphoguanosine)-ribonucleoside in mRNA + S-adenosyl-L-homocysteine. The catalysed reaction is a 5'-end (N(7)-methyl 5'-triphosphoguanosine)-ribonucleoside in mRNA + S-adenosyl-L-methionine = a 5'-end (N(7)-methyl 5'-triphosphoguanosine)-(2'-O-methyl-ribonucleoside) in mRNA + S-adenosyl-L-homocysteine + H(+). In terms of biological role, plays a role in virus budding by binding to the cell membrane and gathering the viral RNA into a nucleocapsid that forms the core of a mature virus particle. During virus entry, may induce genome penetration into the host cytoplasm after hemifusion induced by the surface proteins. Can migrate to the cell nucleus where it modulates host functions. Overcomes the anti-viral effects of host EXOC1 by sequestering and degrading the latter through the proteasome degradation pathway. Its function is as follows. Inhibits RNA silencing by interfering with host Dicer. Functionally, prevents premature fusion activity of envelope proteins in trans-Golgi by binding to envelope protein E at pH6.0. After virion release in extracellular space, gets dissociated from E dimers. Acts as a chaperone for envelope protein E during intracellular virion assembly by masking and inactivating envelope protein E fusion peptide. prM is the only viral peptide matured by host furin in the trans-Golgi network probably to avoid catastrophic activation of the viral fusion activity in acidic Golgi compartment prior to virion release. prM-E cleavage is inefficient, and many virions are only partially matured. These uncleaved prM would play a role in immune evasion. In terms of biological role, may play a role in virus budding. Exerts cytotoxic effects by activating a mitochondrial apoptotic pathway through M ectodomain. May display a viroporin activity. Its function is as follows. Binds to host cell surface receptor and mediates fusion between viral and cellular membranes. Envelope protein is synthesized in the endoplasmic reticulum in the form of heterodimer with protein prM. They play a role in virion budding in the ER, and the newly formed immature particle is covered with 60 spikes composed of heterodimer between precursor prM and envelope protein E. The virion is transported to the Golgi apparatus where the low pH causes dissociation of PrM-E heterodimers and formation of E homodimers. prM-E cleavage is inefficient, and many virions are only partially matured. These uncleaved prM would play a role in immune evasion. Functionally, involved in immune evasion, pathogenesis and viral replication. Once cleaved off the polyprotein, is targeted to three destinations: the viral replication cycle, the plasma membrane and the extracellular compartment. Essential for viral replication. Required for formation of the replication complex and recruitment of other non-structural proteins to the ER-derived membrane structures. Excreted as a hexameric lipoparticle that plays a role against host immune response. Antagonizing the complement function. Binds to the host macrophages and dendritic cells. Inhibits signal transduction originating from Toll-like receptor 3 (TLR3). Disrupts the host endothelial glycocalyx layer of host pulmonary microvascular endothelial cells, inducing degradation of sialic acid and shedding of heparan sulfate proteoglycans. NS1 induces expression of sialidases, heparanase, and activates cathepsin L, which activates heparanase via enzymatic cleavage. These effects are probably linked to the endothelial hyperpermeability observed in severe dengue disease. In terms of biological role, component of the viral RNA replication complex that functions in virion assembly and antagonizes the host immune response. Its function is as follows. Required cofactor for the serine protease function of NS3. May have membrane-destabilizing activity and form viroporins. Functionally, displays three enzymatic activities: serine protease, NTPase and RNA helicase. NS3 serine protease, in association with NS2B, performs its autocleavage and cleaves the polyprotein at dibasic sites in the cytoplasm: C-prM, NS2A-NS2B, NS2B-NS3, NS3-NS4A, NS4A-2K and NS4B-NS5. NS3 RNA helicase binds RNA and unwinds dsRNA in the 3' to 5' direction. Regulates the ATPase activity of the NS3 helicase activity. NS4A allows NS3 helicase to conserve energy during unwinding. Plays a role in the inhibition of the host innate immune response. Interacts with host MAVS and thereby prevents the interaction between RIGI and MAVS. In turn, IFN-beta production is impaired. Interacts with host AUP1 which mediates induction of lipophagy in host cells and facilitates production of virus progeny particles. In terms of biological role, functions as a signal peptide for NS4B and is required for the interferon antagonism activity of the latter. Its function is as follows. Induces the formation of ER-derived membrane vesicles where the viral replication takes place. Inhibits interferon (IFN)-induced host STAT1 phosphorylation and nuclear translocation, thereby preventing the establishment of cellular antiviral state by blocking the IFN-alpha/beta pathway. Functionally, replicates the viral (+) and (-) RNA genome, and performs the capping of genomes in the cytoplasm. NS5 methylates viral RNA cap at guanine N-7 and ribose 2'-O positions. Besides its role in RNA genome replication, also prevents the establishment of cellular antiviral state by blocking the interferon-alpha/beta (IFN-alpha/beta) signaling pathway. Inhibits host TYK2 and STAT2 phosphorylation, thereby preventing activation of JAK-STAT signaling pathway. May reduce immune responses by preventing the recruitment of the host PAF1 complex to interferon-responsive genes. The chain is Genome polyprotein from Aedes aegypti (Yellowfever mosquito).